Here is a 129-residue protein sequence, read N- to C-terminus: Putative membrane protein insertion efficiency factor (129 aa).

It belongs to the UPF0161 family.

The protein resides in the cell inner membrane. Its function is as follows. Could be involved in insertion of integral membrane proteins into the membrane. The polypeptide is Putative membrane protein insertion efficiency factor (Rhodopseudomonas palustris (strain ATCC BAA-98 / CGA009)).